Reading from the N-terminus, the 340-residue chain is Glyceraldehyde-3-phosphate dehydrogenase (340 aa).

NAD(+)-binding positions include 11–12 (SI) and Gly-111. 140–142 (SCN) contacts D-glyceraldehyde 3-phosphate. Cys-141 functions as the Nucleophile in the catalytic mechanism. Arg-169 provides a ligand contact to NAD(+). A D-glyceraldehyde 3-phosphate-binding site is contributed by 195–196 (HG). Gln-303 provides a ligand contact to NAD(+).

This sequence belongs to the glyceraldehyde-3-phosphate dehydrogenase family. Homotetramer.

Its subcellular location is the cytoplasm. It carries out the reaction D-glyceraldehyde 3-phosphate + phosphate + NADP(+) = (2R)-3-phospho-glyceroyl phosphate + NADPH + H(+). The enzyme catalyses D-glyceraldehyde 3-phosphate + phosphate + NAD(+) = (2R)-3-phospho-glyceroyl phosphate + NADH + H(+). The protein operates within carbohydrate degradation; glycolysis; pyruvate from D-glyceraldehyde 3-phosphate: step 1/5. The protein is Glyceraldehyde-3-phosphate dehydrogenase of Methanococcus maripaludis (strain C6 / ATCC BAA-1332).